The following is a 347-amino-acid chain: MLENGSHFFEGVEKLLEIWFEESSNGDDDLRNISRSDWENVLSNVNCQIISTSKNDIIDAFVLSESSMFVSKRRWILKTCGTTTPLKCLGQLLKLAEANGYNVVADLFYSRKNFTRPEAQITPHQGFTEEVTYLDSIFPNGRSYCLGSMNLECWYLYTFSRSDIKITPQLISDEKNVDSDPDQTIEILMQDLDPETMSIFYKNKFNDANGATVKSGIDTILPTMHIDDFLFDPCGYSMNGINDKGEYMTIHITPENQFSYVSFETNVALSNYRKLINQVINTFKPGKFIVTIFANKCSLAYETMKELEVEYSQGSHWKRTDMQCCNFPSYNLLFAQYSHSEKTGDYL.

Residues glutamate 10 and glutamate 13 contribute to the active site. Serine 66 serves as the catalytic Schiff-base intermediate with substrate; via pyruvic acid. A Pyruvic acid (Ser); by autocatalysis modification is found at serine 66. Residue cysteine 80 is the Proton donor; for catalytic activity of the active site. Residues serine 237 and histidine 251 each act as proton acceptor; for processing activity in the active site.

This sequence belongs to the eukaryotic AdoMetDC family. The cofactor is pyruvate. In terms of processing, is synthesized initially as an inactive proenzyme. Formation of the active enzyme involves a self-maturation process in which the active site pyruvoyl group is generated from an internal serine residue via an autocatalytic post-translational modification. Two non-identical subunits are generated from the proenzyme in this reaction, and the pyruvate is formed at the N-terminus of the alpha chain, which is derived from the carboxyl end of the proenzyme. The post-translation cleavage follows an unusual pathway, termed non-hydrolytic serinolysis, in which the side chain hydroxyl group of the serine supplies its oxygen atom to form the C-terminus of the beta chain, while the remainder of the serine residue undergoes an oxidative deamination to produce ammonia and the pyruvoyl group blocking the N-terminus of the alpha chain.

It carries out the reaction S-adenosyl-L-methionine + H(+) = S-adenosyl 3-(methylsulfanyl)propylamine + CO2. It participates in amine and polyamine biosynthesis; S-adenosylmethioninamine biosynthesis; S-adenosylmethioninamine from S-adenosyl-L-methionine: step 1/1. The chain is S-adenosylmethionine decarboxylase proenzyme (SamDC) from Drosophila melanogaster (Fruit fly).